The chain runs to 122 residues: Large ribosomal subunit protein uL14c (122 aa).

The protein belongs to the universal ribosomal protein uL14 family. Part of the 50S ribosomal subunit.

Its subcellular location is the plastid. It is found in the chloroplast. Its function is as follows. Binds to 23S rRNA. The chain is Large ribosomal subunit protein uL14c from Capsella bursa-pastoris (Shepherd's purse).